The chain runs to 468 residues: 6-phospho-beta-galactosidase (468 aa).

Residues Q19, H116, N159, E160, and N297 each contribute to the D-galactose 6-phosphate site. The active-site Proton donor is E160. The Nucleophile role is filled by E375. S428, W429, K435, and Y437 together coordinate D-galactose 6-phosphate.

Belongs to the glycosyl hydrolase 1 family.

The catalysed reaction is a 6-phospho-beta-D-galactoside + H2O = D-galactose 6-phosphate + an alcohol. Its pathway is carbohydrate metabolism; lactose degradation; D-galactose 6-phosphate and beta-D-glucose from lactose 6-phosphate: step 1/1. In Streptococcus mutans serotype c (strain ATCC 700610 / UA159), this protein is 6-phospho-beta-galactosidase.